The following is a 341-amino-acid chain: Glycerol-3-phosphate dehydrogenase [NAD(P)+] (341 aa).

Residues S12, W13, R33, and K107 each contribute to the NADPH site. Residues K107, G134, and T136 each contribute to the sn-glycerol 3-phosphate site. Position 138 (A138) interacts with NADPH. Sn-glycerol 3-phosphate-binding residues include K189, D242, S252, R253, and N254. Residue K189 is the Proton acceptor of the active site. R253 is an NADPH binding site. NADPH is bound by residues V277 and E279.

It belongs to the NAD-dependent glycerol-3-phosphate dehydrogenase family.

It localises to the cytoplasm. The catalysed reaction is sn-glycerol 3-phosphate + NAD(+) = dihydroxyacetone phosphate + NADH + H(+). It carries out the reaction sn-glycerol 3-phosphate + NADP(+) = dihydroxyacetone phosphate + NADPH + H(+). Its pathway is membrane lipid metabolism; glycerophospholipid metabolism. Functionally, catalyzes the reduction of the glycolytic intermediate dihydroxyacetone phosphate (DHAP) to sn-glycerol 3-phosphate (G3P), the key precursor for phospholipid synthesis. The polypeptide is Glycerol-3-phosphate dehydrogenase [NAD(P)+] (Halothermothrix orenii (strain H 168 / OCM 544 / DSM 9562)).